We begin with the raw amino-acid sequence, 319 residues long: HPr kinase/phosphorylase (319 aa).

Active-site residues include histidine 141 and lysine 162. 156–163 (GNSGVGKS) contacts ATP. Serine 163 is a Mg(2+) binding site. The active-site Proton acceptor; for phosphorylation activity. Proton donor; for dephosphorylation activity is the aspartate 180. The segment at 204–213 (MEIRGIGIID) is important for the catalytic mechanism of both phosphorylation and dephosphorylation. Mg(2+) is bound at residue glutamate 205. Arginine 246 is an active-site residue. An important for the catalytic mechanism of dephosphorylation region spans residues 267-272 (PVKVGR).

Belongs to the HPrK/P family. In terms of assembly, homohexamer. Mg(2+) serves as cofactor.

It carries out the reaction [HPr protein]-L-serine + ATP = [HPr protein]-O-phospho-L-serine + ADP + H(+). The enzyme catalyses [HPr protein]-O-phospho-L-serine + phosphate + H(+) = [HPr protein]-L-serine + diphosphate. In terms of biological role, catalyzes the ATP- as well as the pyrophosphate-dependent phosphorylation of a specific serine residue in HPr, a phosphocarrier protein of the phosphoenolpyruvate-dependent sugar phosphotransferase system (PTS). HprK/P also catalyzes the pyrophosphate-producing, inorganic phosphate-dependent dephosphorylation (phosphorolysis) of seryl-phosphorylated HPr (P-Ser-HPr). The two antagonistic activities of HprK/P are regulated by several intracellular metabolites, which change their concentration in response to the absence or presence of rapidly metabolisable carbon sources (glucose, fructose, etc.) in the growth medium. Therefore, by controlling the phosphorylation state of HPr, HPrK/P is a sensor enzyme that plays a major role in the regulation of carbon metabolism and sugar transport: it mediates carbon catabolite repression (CCR), and regulates PTS-catalyzed carbohydrate uptake and inducer exclusion. The polypeptide is HPr kinase/phosphorylase (Lactobacillus johnsonii (strain CNCM I-12250 / La1 / NCC 533)).